We begin with the raw amino-acid sequence, 155 residues long: Ribonuclease H (155 aa).

An RNase H type-1 domain is found at Met-1–Ser-142. Mg(2+) is bound by residues Asp-10, Glu-48, Asp-70, and Asp-134.

It belongs to the RNase H family. Monomer. Mg(2+) is required as a cofactor.

The protein localises to the cytoplasm. The enzyme catalyses Endonucleolytic cleavage to 5'-phosphomonoester.. Functionally, endonuclease that specifically degrades the RNA of RNA-DNA hybrids. The protein is Ribonuclease H of Serratia proteamaculans (strain 568).